The primary structure comprises 533 residues: MRLAFWLYEGTALHGISRVTNSMKDVHTVYHAPQGDDYITATYTMLERTPQFPGLSISVVRGQDLARGESRLPATLQQVEEHYNPRMIVVAPSCSTALLQEDLEQLSRHSGVDPDKILVYDVNPFRVQEHEAAEGLFTELVKRSAQPQTLTEQPSVNLLGFTSLGFHLRSDLTSLRRILKTLGITINVVAPWGASMDDLSRLPSAWVNVVPYHEMGNGAARYLREKFGMPILSGAPMGVNPTLKWIEDLLAQINDIARERGLPLLDMPDLTEFSLDGLSAPSGVPWFARTADMESFSGKRAFVFGDATHTVGMVKFLKDELGMQIIGAGTYLSRHADWVRSELEGYLPEPLIVTDKFQEISKKIEDEMPELVCGTQMERHSCRKLDVPCMVISTPTHIEDHLIAYYPILGFEGADILADRVYTSCKLGLEKHLIDFFGDAGLEYEDDEEAVGLSTNGHAAAETETSIAGEAATVVSAEGDGMPWTDDAEKMLKKVPFFVRKKVRKNTENYAREIGETTISGDVFRKAKEALGG.

Position 36 (aspartate 36) interacts with [4Fe-4S] cluster. Catalysis depends on aspartate 292, which acts as the Proton donor. 428 to 429 (GL) provides a ligand contact to substrate.

It belongs to the ChlB/BchB/BchZ family. In terms of assembly, protochlorophyllide reductase is composed of three subunits; BchL, BchN and BchB. Forms a heterotetramer of two BchB and two BchN subunits. It depends on [4Fe-4S] cluster as a cofactor.

The catalysed reaction is chlorophyllide a + oxidized 2[4Fe-4S]-[ferredoxin] + 2 ADP + 2 phosphate = protochlorophyllide a + reduced 2[4Fe-4S]-[ferredoxin] + 2 ATP + 2 H2O. It functions in the pathway porphyrin-containing compound metabolism; bacteriochlorophyll biosynthesis (light-independent). In terms of biological role, component of the dark-operative protochlorophyllide reductase (DPOR) that uses Mg-ATP and reduced ferredoxin to reduce ring D of protochlorophyllide (Pchlide) to form chlorophyllide a (Chlide). This reaction is light-independent. The NB-protein (BchN-BchB) is the catalytic component of the complex. The protein is Light-independent protochlorophyllide reductase subunit B of Prosthecochloris aestuarii (strain DSM 271 / SK 413).